A 531-amino-acid chain; its full sequence is Probable protein phosphatase 2C 66 (531 aa).

The disordered stretch occupies residues 1-47; sequence MGSCLSSDLPPRAGAGAGASPGWPQRWRRRRQRGVERGGAVSGGGGG. The span at 10-25 shows a compositional bias: low complexity; the sequence is PPRAGAGAGASPGWPQ. Positions 88–401 constitute a PPM-type phosphatase domain; the sequence is AACLHTQQGR…DDCAVVCLFL (314 aa). 2 residues coordinate Mn(2+): Asp123 and Gly124. The span at 151–172 shows a compositional bias: polar residues; sequence SANEDTSSHQNGSISGSVNSEE. Positions 151–176 are disordered; it reads SANEDTSSHQNGSISGSVNSEESPVV. Residues Asp346 and Asp392 each coordinate Mn(2+).

This sequence belongs to the PP2C family. Requires Mg(2+) as cofactor. Mn(2+) is required as a cofactor.

The catalysed reaction is O-phospho-L-seryl-[protein] + H2O = L-seryl-[protein] + phosphate. The enzyme catalyses O-phospho-L-threonyl-[protein] + H2O = L-threonyl-[protein] + phosphate. In Oryza sativa subsp. japonica (Rice), this protein is Probable protein phosphatase 2C 66.